The primary structure comprises 234 residues: uncharacterized protein (234 aa).

Residues 65–89 form a disordered region; it reads QNANRQEGRRRGLRPSSDGNLRREN. The RING-type zinc finger occupies 185-220; that stretch reads CAVCLHNKVCVLFQKCKHVITCGPCSLRIKECPVCK.

Belongs to the IIV-6 175R/332L family.

This is an uncharacterized protein from Acheta domesticus (House cricket).